A 98-amino-acid chain; its full sequence is Aspartyl/glutamyl-tRNA(Asn/Gln) amidotransferase subunit C (98 aa).

This sequence belongs to the GatC family. Heterotrimer of A, B and C subunits.

The catalysed reaction is L-glutamyl-tRNA(Gln) + L-glutamine + ATP + H2O = L-glutaminyl-tRNA(Gln) + L-glutamate + ADP + phosphate + H(+). It catalyses the reaction L-aspartyl-tRNA(Asn) + L-glutamine + ATP + H2O = L-asparaginyl-tRNA(Asn) + L-glutamate + ADP + phosphate + 2 H(+). In terms of biological role, allows the formation of correctly charged Asn-tRNA(Asn) or Gln-tRNA(Gln) through the transamidation of misacylated Asp-tRNA(Asn) or Glu-tRNA(Gln) in organisms which lack either or both of asparaginyl-tRNA or glutaminyl-tRNA synthetases. The reaction takes place in the presence of glutamine and ATP through an activated phospho-Asp-tRNA(Asn) or phospho-Glu-tRNA(Gln). This chain is Aspartyl/glutamyl-tRNA(Asn/Gln) amidotransferase subunit C, found in Microcystis aeruginosa (strain NIES-843 / IAM M-2473).